Here is a 235-residue protein sequence, read N- to C-terminus: Casparian strip membrane protein 2 (235 aa).

Topologically, residues 1-70 (MTSESATVIQ…RSGAEGFRRC (70 aa)) are cytoplasmic. A helical membrane pass occupies residues 71–91 (LAVIDFLLRVAAFGPTLAAAI). The Extracellular segment spans residues 92 to 118 (STGTADERLSVFTNFFQFHARFDDFPA). A helical membrane pass occupies residues 119-139 (FTFFLVANAVAAGYLVLSLPF). Topologically, residues 140-162 (SVVVILRPNKATGGVRLLLLLCD) are cytoplasmic. Residues 163-183 (VLIMALLTAAGAAAAAIVYVA) form a helical membrane-spanning segment. Residues 184 to 210 (HSGNRRANWVPICMQFHGFCQRTSGSV) lie on the Extracellular side of the membrane. A helical transmembrane segment spans residues 211 to 231 (VATFLAVLVFIVLILMAACVI). The Cytoplasmic portion of the chain corresponds to 232–235 (RRSK).

The protein belongs to the Casparian strip membrane proteins (CASP) family. In terms of assembly, homodimer and heterodimers.

It is found in the cell membrane. Functionally, regulates membrane-cell wall junctions and localized cell wall deposition. Required for establishment of the Casparian strip membrane domain (CSD) and the subsequent formation of Casparian strips, a cell wall modification of the root endodermis that determines an apoplastic barrier between the intraorganismal apoplasm and the extraorganismal apoplasm and prevents lateral diffusion. In Sorghum bicolor (Sorghum), this protein is Casparian strip membrane protein 2.